A 489-amino-acid chain; its full sequence is Glucose-6-phosphate isomerase (489 aa).

E309 serves as the catalytic Proton donor. Active-site residues include H340 and K459.

This sequence belongs to the GPI family.

The protein localises to the cytoplasm. The enzyme catalyses alpha-D-glucose 6-phosphate = beta-D-fructose 6-phosphate. It participates in carbohydrate biosynthesis; gluconeogenesis. The protein operates within carbohydrate degradation; glycolysis; D-glyceraldehyde 3-phosphate and glycerone phosphate from D-glucose: step 2/4. Functionally, catalyzes the reversible isomerization of glucose-6-phosphate to fructose-6-phosphate. The sequence is that of Glucose-6-phosphate isomerase from Idiomarina loihiensis (strain ATCC BAA-735 / DSM 15497 / L2-TR).